Here is a 550-residue protein sequence, read N- to C-terminus: Chaperonin GroEL (550 aa).

ATP-binding positions include Thr30–Pro33, Lys51, Asp87–Thr91, Gly415, and Asp497.

Belongs to the chaperonin (HSP60) family. In terms of assembly, forms a cylinder of 14 subunits composed of two heptameric rings stacked back-to-back. Interacts with the co-chaperonin GroES.

It localises to the cytoplasm. The enzyme catalyses ATP + H2O + a folded polypeptide = ADP + phosphate + an unfolded polypeptide.. Together with its co-chaperonin GroES, plays an essential role in assisting protein folding. The GroEL-GroES system forms a nano-cage that allows encapsulation of the non-native substrate proteins and provides a physical environment optimized to promote and accelerate protein folding. The polypeptide is Chaperonin GroEL (Yersinia enterocolitica serotype O:8 / biotype 1B (strain NCTC 13174 / 8081)).